A 249-amino-acid chain; its full sequence is uncharacterized protein (249 aa).

An N-terminal signal peptide occupies residues 1 to 43 (MRRGRSRPAGAAPAALLLPLLLLLPLTGCDRLAAAPAEHAAAA). The tract at residues 40-59 (AAAAGDPAQDADRGRRLPPV) is disordered. A NodB homology domain is found at 68 to 243 (PVVFLTYDDG…TIEEQGLRVG (176 aa)).

This is an uncharacterized protein from Streptomyces coelicolor (strain ATCC BAA-471 / A3(2) / M145).